A 103-amino-acid chain; its full sequence is Serine rich endogenous peptide 9 (103 aa).

A signal peptide spans 1-25 (MENIFFSKLTQVFIVALLCIFIYRT). Positions 54–103 (IYVKPPPLKSKDSNQKGKRGETYYKPNSEIGTGPSHSGHGGSSIEHVSSP) are disordered. Basic and acidic residues predominate over residues 62 to 75 (KSKDSNQKGKRGET). An SCOOP motif motif is present at residues 82–96 (EIGTGPSHSGHGGSS). Residues 84-103 (GTGPSHSGHGGSSIEHVSSP) show a composition bias toward low complexity. The short motif at 88–90 (SHS) is the SxS motif essential for MIK2 binding element.

Belongs to the serine rich endogenous peptide (SCOOP) phytocytokine family. As to quaternary structure, interacts with MIK2 (via extracellular leucine-rich repeat domain); this interaction triggers the formation of complex between MIK2 and the BAK1/SERK3 and SERK4 coreceptors, and subsequent BAK1 activation by phosphorylation. Mostly expressed in seedlings shoots and roots, and, to a lower extent, in leaves, but barely in flowers.

It is found in the cell membrane. It localises to the secreted. Its subcellular location is the extracellular space. The protein localises to the apoplast. Brassicaceae-specific phytocytokine (plant endogenous peptide released into the apoplast) perceived by MIK2 in a BAK1/SERK3 and SERK4 coreceptors-dependent manner, that modulates various physiological and antimicrobial processes including growth prevention and reactive oxygen species (ROS) response regulation. The protein is Serine rich endogenous peptide 9 of Arabidopsis thaliana (Mouse-ear cress).